Consider the following 188-residue polypeptide: NADH-quinone oxidoreductase subunit B 1 (188 aa).

Residues Cys-32, Cys-33, Cys-98, and Cys-128 each contribute to the [4Fe-4S] cluster site. A disordered region spans residues 153–188 (VGGVSRPDALASPADALPPRAADSLTAPPVRPPDPS). The segment covering 157-177 (SRPDALASPADALPPRAADSL) has biased composition (low complexity).

The protein belongs to the complex I 20 kDa subunit family. NDH-1 is composed of 14 different subunits. Subunits NuoB, C, D, E, F, and G constitute the peripheral sector of the complex. It depends on [4Fe-4S] cluster as a cofactor.

It is found in the cell membrane. The enzyme catalyses a quinone + NADH + 5 H(+)(in) = a quinol + NAD(+) + 4 H(+)(out). Functionally, NDH-1 shuttles electrons from NADH, via FMN and iron-sulfur (Fe-S) centers, to quinones in the respiratory chain. The immediate electron acceptor for the enzyme in this species is believed to be a menaquinone. Couples the redox reaction to proton translocation (for every two electrons transferred, four hydrogen ions are translocated across the cytoplasmic membrane), and thus conserves the redox energy in a proton gradient. This is NADH-quinone oxidoreductase subunit B 1 (nuoB1) from Salinispora tropica (strain ATCC BAA-916 / DSM 44818 / JCM 13857 / NBRC 105044 / CNB-440).